A 206-amino-acid polypeptide reads, in one-letter code: Small ribosomal subunit protein uS4 (206 aa).

The S4 RNA-binding domain occupies 96–156 (GRLDNVVYRM…EKAKKQARIK (61 aa)).

Belongs to the universal ribosomal protein uS4 family. Part of the 30S ribosomal subunit. Contacts protein S5. The interaction surface between S4 and S5 is involved in control of translational fidelity.

In terms of biological role, one of the primary rRNA binding proteins, it binds directly to 16S rRNA where it nucleates assembly of the body of the 30S subunit. Its function is as follows. With S5 and S12 plays an important role in translational accuracy. The polypeptide is Small ribosomal subunit protein uS4 (Aeromonas hydrophila subsp. hydrophila (strain ATCC 7966 / DSM 30187 / BCRC 13018 / CCUG 14551 / JCM 1027 / KCTC 2358 / NCIMB 9240 / NCTC 8049)).